Reading from the N-terminus, the 502-residue chain is Protein adenylyltransferase Fic (502 aa).

The disordered stretch occupies residues 1–24; the sequence is MAMATGKATEEEQPEQGQQQQQLQ. Positions 15–24 are enriched in low complexity; it reads EQGQQQQQLQ. A helical transmembrane segment spans residues 38–60; sequence FALFFIAGCLAAFGFHALTSSSG. TPR repeat units follow at residues 122–155 and 156–190; these read AMGA…APKH and PEVL…NPSN. Positions 247-252 match the Inhibitory (S/T)XXXE(G/N) motif motif; the sequence is SVGIEG. Residues glutamate 251 and 332-335 each bind ATP; that span reads VGGH. Positions 301–436 constitute a Fido domain; sequence ITLKDILELH…IRPFVRFIAD (136 aa). The active site involves histidine 379. ATP is bound by residues 383-390, 415-416, and asparagine 423; these read DGNGRTSR and YY. Residues 478 to 502 form a disordered region; it reads SPELYESGSGSGAGAGAGSGQKGMP. The span at 486–502 shows a compositional bias: gly residues; the sequence is SGSGAGAGAGSGQKGMP.

The protein belongs to the fic family. As to quaternary structure, homodimer.

It is found in the membrane. It carries out the reaction L-tyrosyl-[protein] + ATP = O-(5'-adenylyl)-L-tyrosyl-[protein] + diphosphate. The catalysed reaction is L-threonyl-[protein] + ATP = 3-O-(5'-adenylyl)-L-threonyl-[protein] + diphosphate. It catalyses the reaction 3-O-(5'-adenylyl)-L-threonyl-[protein] + H2O = L-threonyl-[protein] + AMP + H(+). The side chain of Glu-251 determines which of the two opposing activities (AMPylase or de-AMPylase) will take place. In response to endoplasmic reticulum stress, mediates de-AMPylase activity. Adenylyltransferase activity is inhibited by the inhibitory helix present at the N-terminus: Glu-251 binds ATP and competes with ATP-binding at Arg-390, thereby preventing adenylyltransferase activity. In unstressed cells, disengagement of Glu-251 promotes adenylyltransferase activity. Activation dissociates ATP-binding from Glu-251, allowing ordered binding of the entire ATP moiety with the alpha-phosphate in an orientation that is productive for accepting an incoming target hydroxyl side chain. Its function is as follows. Protein that can both mediate the addition of adenosine 5'-monophosphate (AMP) to specific residues of target proteins (AMPylation), and the removal of the same modification from target proteins (de-AMPylation), depending on the context. The side chain of Glu-251 determines which of the two opposing activities (AMPylase or de-AMPylase) will take place. Acts as a key regulator of the unfolded protein response (UPR) by mediating AMPylation or de-AMPylation of Hsc70-3/BiP. In unstressed cells, acts as an adenylyltransferase by mediating AMPylation of Hsc70-3/BiP at 'Thr-518', thereby inactivating it. In response to endoplasmic reticulum stress, acts as a phosphodiesterase by mediating removal of ATP (de-AMPylation) from Hsc70-3/BiP at 'Thr-518', leading to restore HSPA5/BiP activity. This is Protein adenylyltransferase Fic from Drosophila mojavensis (Fruit fly).